The sequence spans 224 residues: Large ribosomal subunit protein uL11c (224 aa).

Residues 1 to 66 constitute a chloroplast transit peptide; it reads MAQPLVAAPS…SHRRLSIVAM (66 aa). N6,N6,N6-trimethyllysine occurs at positions 75 and 111.

In terms of assembly, component of the chloroplast large ribosomal subunit (LSU). Mature 70S chloroplast ribosomes of higher plants consist of a small (30S) and a large (50S) subunit. The 30S small subunit contains 1 molecule of ribosomal RNA (16S rRNA) and 24 different proteins. The 50S large subunit contains 3 rRNA molecules (23S, 5S and 4.5S rRNA) and 33 different proteins.

The protein resides in the plastid. It localises to the chloroplast. Component of the chloroplast ribosome (chloro-ribosome), a dedicated translation machinery responsible for the synthesis of chloroplast genome-encoded proteins, including proteins of the transcription and translation machinery and components of the photosynthetic apparatus. This chain is Large ribosomal subunit protein uL11c (rpl11), found in Spinacia oleracea (Spinach).